Reading from the N-terminus, the 348-residue chain is MQFGELLAAVRKAQANVMLFLEEKEQAALSQANGIKAHLEYRSAEMEKSKQELETMAAISNTVQFLEEYCKFKNTEDITFPSVYIGLKDKLSGIRKVITESTVHLIQLLENYKKKLQEFSKEEEYDIRTQVSAIVQRKYWTSKPEPSTREQFLQYVHDITFDPDTAHKYLRLQEENRKVTNTTPWEHPYPDLPSRFLHWRQVLSQQSLYLHRYYFEVEIFGAGTYVGLTCKGIDQKGEERSSCISGNNFSWSLQWNGKEFTAWYSDMETPLKAGPFWRLGVYIDFPGGILSFYGVEYDSMTLVHKFACKFSEPVYAAFWLSKKENAIRIVDLGEEPEKPAPSLVGTAP.

Positions 139–337 (YWTSKPEPST…RIVDLGEEPE (199 aa)) constitute a B30.2/SPRY domain.

Belongs to the TRIM/RBCC family.

Its subcellular location is the cytoplasm. This chain is Tripartite motif-containing protein 16-like protein (TRIM16L), found in Homo sapiens (Human).